Reading from the N-terminus, the 88-residue chain is Parvalbumin beta 3 (88 aa).

Ala-1 is modified (N-acetylalanine). The 36-residue stretch at 31–66 (KSPEEVKKFFAIIDQDHSGFIEEEELKLFLQTFSAG) folds into the EF-hand domain. Residues Asp-44, Asp-46, Ser-48, Phe-50, Glu-52, Glu-55, and Glu-81 each coordinate Ca(2+).

The protein belongs to the parvalbumin family.

Its function is as follows. In muscle, parvalbumin is thought to be involved in relaxation after contraction. It binds two calcium ions. This chain is Parvalbumin beta 3, found in Merluccius productus (North Pacific hake).